Reading from the N-terminus, the 247-residue chain is Probable phosphatase Shew_1420 (247 aa).

The Zn(2+) site is built by His8, His10, His16, His41, Glu74, His102, His132, Asp193, and His195.

Belongs to the PHP family. The cofactor is Zn(2+).

This Shewanella loihica (strain ATCC BAA-1088 / PV-4) protein is Probable phosphatase Shew_1420.